The sequence spans 272 residues: Putative phosphoenolpyruvate synthase regulatory protein (272 aa).

152-159 (GVSRCGKT) provides a ligand contact to ADP.

The protein belongs to the pyruvate, phosphate/water dikinase regulatory protein family. PSRP subfamily.

The enzyme catalyses [pyruvate, water dikinase] + ADP = [pyruvate, water dikinase]-phosphate + AMP + H(+). The catalysed reaction is [pyruvate, water dikinase]-phosphate + phosphate + H(+) = [pyruvate, water dikinase] + diphosphate. Its function is as follows. Bifunctional serine/threonine kinase and phosphorylase involved in the regulation of the phosphoenolpyruvate synthase (PEPS) by catalyzing its phosphorylation/dephosphorylation. The chain is Putative phosphoenolpyruvate synthase regulatory protein from Pseudomonas putida (strain ATCC 47054 / DSM 6125 / CFBP 8728 / NCIMB 11950 / KT2440).